The following is a 274-amino-acid chain: Nickel/cobalt efflux system RcnA (274 aa).

Topologically, residues 1 to 12 are periplasmic; the sequence is MGEFPTLLQQGN. The chain crosses the membrane as a helical span at residues 13–33; it reads GWFFIPSAILLGILHGLEPGH. The Cytoplasmic segment spans residues 34-51; that stretch reads SKTMMAAFIIAIKGTVKQ. Residues 52–72 traverse the membrane as a helical segment; the sequence is AVMLGLAATLSHTAIVWLIAL. Over 73–85 the chain is Periplasmic; the sequence is GGMYLSRAFTAQS. A helical membrane pass occupies residues 86–106; sequence VEPWLQLISAIIILSTACWMF. Residues 107 to 174 are Cytoplasmic-facing; that stretch reads WRTWRGEQQW…FDGQTVTNGQ (68 aa). A compositionally biased stretch (basic and acidic residues) spans 122–141; the sequence is HHDHDHDHDHDHDHHGHIHP. Positions 122–143 are disordered; it reads HHDHDHDHDHDHDHHGHIHPEG. The helical transmembrane segment at 175 to 195 threads the bilayer; sequence ILLFGLTGGLIPCPAAITVLL. The Periplasmic segment spans residues 196-209; sequence ICIQLKAFTLGATM. Residues 210–230 form a helical membrane-spanning segment; it reads VLSFSLSLALTLVTVGVGAAI. Residues 231-251 lie on the Cytoplasmic side of the membrane; sequence SVQQAAKRWSGFSTLARRAPY. Residues 252-272 traverse the membrane as a helical segment; that stretch reads FSSILIGLVGVYMGIHGYTGI. The Periplasmic segment spans residues 273–274; sequence MQ.

This sequence belongs to the NiCoT transporter (TC 2.A.52) family. RcnA subfamily.

Its subcellular location is the cell inner membrane. Functionally, efflux system for nickel and cobalt. This chain is Nickel/cobalt efflux system RcnA (rcnA), found in Salmonella paratyphi A (strain ATCC 9150 / SARB42).